Here is a 421-residue protein sequence, read N- to C-terminus: TITAN-like protein (421 aa).

The segment at 11–32 (EFCTVCRFHHDQGSRHKYFPRH) adopts a C2H2-type 1; degenerate zinc-finger fold. The C2H2-type 2; degenerate zinc-finger motif lies at 70 to 100 (VWCVFCDEDIVELGSSFACSKAINHFASSDH). Residues 279-306 (ISSSHSTDAGGNVHSGAPPPWLDANDGD) are disordered. 2 consecutive short sequence motifs (nuclear localization signal) follow at residues 328-335 (NRKLNPNR) and 377-384 (TRKESRKE). The segment at 376–421 (GTRKESRKEFEKEKRKLVKTESISTESEPVKIQPYISKRARRESGE) is disordered. Residues 377-389 (TRKESRKEFEKEK) show a composition bias toward basic and acidic residues.

As to expression, also present in cotyledons, hypocotyls, stems, veins of sepals and stigmas, and actively dividing tissues such as shoot apical meristem, root tips and emerging true leaves. Weak expression in petals and anthers, and not detected in mature leaves. In seeds, expressed in both the endosperm and embryo.

The protein localises to the nucleus. Functionally, key regulator for endosperm and embryo nuclear divisions. This chain is TITAN-like protein, found in Arabidopsis thaliana (Mouse-ear cress).